The following is a 382-amino-acid chain: D-galactonate dehydratase (382 aa).

Asp183 serves as a coordination point for Mg(2+). The active-site Proton donor is His185. 2 residues coordinate Mg(2+): Glu209 and Glu235. His285 (proton acceptor) is an active-site residue.

Belongs to the mandelate racemase/muconate lactonizing enzyme family. GalD subfamily. Mg(2+) serves as cofactor.

The enzyme catalyses D-galactonate = 2-dehydro-3-deoxy-D-galactonate + H2O. Its pathway is carbohydrate acid metabolism; D-galactonate degradation; D-glyceraldehyde 3-phosphate and pyruvate from D-galactonate: step 1/3. In terms of biological role, catalyzes the dehydration of D-galactonate to 2-keto-3-deoxy-D-galactonate. This is D-galactonate dehydratase from Klebsiella pneumoniae subsp. pneumoniae (strain ATCC 700721 / MGH 78578).